We begin with the raw amino-acid sequence, 494 residues long: Protein DETOXIFICATION 23 (494 aa).

Positions 1 to 25 are disordered; that stretch reads MARREGEVTETLLKKSTENRGEDRD. The next 12 membrane-spanning stretches (helical) occupy residues 40–60, 74–94, 123–143, 158–178, 188–208, 223–243, 268–288, 297–317, 340–360, 384–404, 416–436, and 441–461; these read LWVV…LSLI, AAYS…LLGM, IVLT…GPIL, IIAL…TCQM, IIAY…WLLV, LVAH…GGCT, GGMI…TGNL, ALAI…GFMA, MVVV…FLFL, LLAF…VAVG, LACY…VVGL, and VWLG…VMTM.

The protein belongs to the multi antimicrobial extrusion (MATE) (TC 2.A.66.1) family.

It localises to the membrane. The protein is Protein DETOXIFICATION 23 of Arabidopsis thaliana (Mouse-ear cress).